A 211-amino-acid chain; its full sequence is Redox-sensing transcriptional repressor Rex (211 aa).

A DNA-binding region (H-T-H motif) is located at residues L18–F57. Residue G92–G97 coordinates NAD(+).

Belongs to the transcriptional regulatory Rex family. Homodimer.

It localises to the cytoplasm. In terms of biological role, modulates transcription in response to changes in cellular NADH/NAD(+) redox state. This Shouchella clausii (strain KSM-K16) (Alkalihalobacillus clausii) protein is Redox-sensing transcriptional repressor Rex.